The primary structure comprises 1100 residues: Lysylphosphatidylglycerol biosynthesis bifunctional protein LysX (1100 aa).

Positions 1–601 are phosphatidylglycerol lysyltransferase; the sequence is MTPTSLARAR…LLHSDGTAPD (601 aa). A run of 7 helical transmembrane segments spans residues 18 to 38, 60 to 80, 84 to 104, 112 to 132, 154 to 174, 206 to 226, and 314 to 332; these read VPAAAGWIVGVIATLSLLASV, FPDTSFAWAFVLALLAAALAA, IAWWILVGYMIAAAGWNIAGL, FAEVGEVIGLAFHLAAIAFLL, LVASMAVGTLIGWGLLELFPG, VFVNALLGLFGAVALMVTAIV, and AYGWAPGVMGASAAGAQAF. The tract at residues 602–1100 is lysine--tRNA ligase; the sequence is GMGLQADLAD…TLPFPLAKPR (499 aa). The segment at residues 661–739 is a DNA-binding region (OB); sequence VAVAGRVLRS…SLLVSGWRLI (79 aa). Residues D1012 and E1019 each contribute to the Mg(2+) site.

It in the N-terminal section; belongs to the LPG synthetase family. In the C-terminal section; belongs to the class-II aminoacyl-tRNA synthetase family. It depends on Mg(2+) as a cofactor.

The protein resides in the cell membrane. The catalysed reaction is tRNA(Lys) + L-lysine + ATP = L-lysyl-tRNA(Lys) + AMP + diphosphate. It catalyses the reaction L-lysyl-tRNA(Lys) + a 1,2-diacyl-sn-glycero-3-phospho-(1'-sn-glycerol) = a 1,2-diacyl-sn-glycero-3-phospho-1'-(3'-O-L-lysyl)-sn-glycerol + tRNA(Lys). Catalyzes the production of L-lysyl-tRNA(Lys)transfer and the transfer of a lysyl group from L-lysyl-tRNA(Lys) to membrane-bound phosphatidylglycerol (PG), which produces lysylphosphatidylglycerol (LPG), one of the components of the bacterial membrane with a positive net charge. LPG synthesis contributes to the resistance to cationic antimicrobial peptides (CAMPs) and likely protects M.tuberculosis against the CAMPs produced by competiting microorganisms (bacteriocins). In fact, the modification of anionic phosphatidylglycerol with positively charged L-lysine results in repulsion of the peptides. In Mycolicibacterium vanbaalenii (strain DSM 7251 / JCM 13017 / BCRC 16820 / KCTC 9966 / NRRL B-24157 / PYR-1) (Mycobacterium vanbaalenii), this protein is Lysylphosphatidylglycerol biosynthesis bifunctional protein LysX (lysX).